Consider the following 559-residue polypeptide: Fanconi-associated nuclease 1 homolog (559 aa).

Positions 386, 507, 522, and 523 each coordinate Mn(2+). The 113-residue stretch at 443 to 555 (DGSYRDAIRC…MPVAVCYVRW (113 aa)) folds into the VRR-NUC domain.

The protein belongs to the FAN1 family. Mn(2+) is required as a cofactor. Mg(2+) serves as cofactor.

The catalysed reaction is Hydrolytically removes 5'-nucleotides successively from the 3'-hydroxy termini of 3'-hydroxy-terminated oligonucleotides.. Functionally, nuclease required for the repair of DNA interstrand cross-links (ICL). Acts as a 5'-3' exonuclease that anchors at a cut end of DNA and cleaves DNA successively at every third nucleotide, allowing to excise an ICL from one strand through flanking incisions. Also has endonuclease activity toward 5'-flaps. In Pseudomonas aeruginosa (strain ATCC 15692 / DSM 22644 / CIP 104116 / JCM 14847 / LMG 12228 / 1C / PRS 101 / PAO1), this protein is Fanconi-associated nuclease 1 homolog.